Here is a 719-residue protein sequence, read N- to C-terminus: Aminodeoxychorismate synthase (719 aa).

Residues 5–199 (RTLLIDNYDS…RDLSLRAAGH (195 aa)) form the Glutamine amidotransferase type-1 domain. Residue Cys-86 is the Nucleophile of the active site. Active-site residues include His-173 and Glu-175. Positions 199 to 224 (HRPPHTERIPAPAPAPAPAPAPAPPA) are disordered. Residues 209-224 (APAPAPAPAPAPAPPA) show a composition bias toward pro residues.

This sequence in the C-terminal section; belongs to the anthranilate synthase component I family.

The catalysed reaction is chorismate + L-glutamine = 4-amino-4-deoxychorismate + L-glutamate. It functions in the pathway antibiotic biosynthesis. In terms of biological role, involved in pristinamycin I biosynthesis. Catalyzes the biosynthesis of 4-amino-4-deoxychorismate (ADC) from chorismate and glutamine. The protein is Aminodeoxychorismate synthase of Streptomyces pristinaespiralis.